The sequence spans 232 residues: Eukaryotic translation initiation factor NCBP (232 aa).

Over residues 1–11 the composition is skewed to basic and acidic residues; it reads MEPAVERKVPE. A disordered region spans residues 1-49; the sequence is MEPAVERKVPEQEEQLQPSHARAEDAPPAAVEEEDEAEAEESERRNREL. The span at 31 to 41 shows a compositional bias: acidic residues; sequence VEEEDEAEAEE.

The protein belongs to the eukaryotic initiation factor 4E family. EIF4F is a multi-subunit complex, the composition of which varies with external and internal environmental conditions. It is composed of at least EIF4A, EIF4E and EIF4G. EIF4E is also known to interact with other partners. In higher plants two isoforms of EIF4F have been identified, named isoform EIF4F and isoform EIF(iso)4F. Isoform EIF4F has subunits p220 and p26, whereas isoform EIF(iso)4F has subunits p82 and p28.

Functionally, recognizes and binds the 7-methylguanosine-containing mRNA cap during an early step in the initiation of protein synthesis and facilitates ribosome binding by inducing the unwinding of the mRNAs secondary structures. In Triticum aestivum (Wheat), this protein is Eukaryotic translation initiation factor NCBP (NCBP).